The following is a 362-amino-acid chain: G-protein coupled receptor 6 (362 aa).

Residues 1 to 74 (MNASAASLND…PGLLLPAVNP (74 aa)) are Extracellular-facing. N-linked (GlcNAc...) asparagine glycosylation is found at asparagine 2, asparagine 9, and asparagine 51. A helical membrane pass occupies residues 75-94 (WDVLLCVSGTVIAGENALVV). The Cytoplasmic portion of the chain corresponds to 95 to 106 (ALIASTPALRTP). A helical transmembrane segment spans residues 107–130 (MFVLVGSLATADLLAGCGLILHFV). The Extracellular segment spans residues 131–142 (FQYLVPSETVSL). A helical membrane pass occupies residues 143–164 (LTVGFLVASFAASVSSLLAITV). Over 165-185 (DRYLSLYNALTYYSRRTLLGV) the chain is Cytoplasmic. Residues 186-205 (HLLLAATWTVSLGLGLLPVL) form a helical membrane-spanning segment. The Extracellular portion of the chain corresponds to 206 to 230 (GWNCLAERAACSVVRPLARSHVALL). Residues 231-249 (SAAFFMVFGIMLHLYVRIC) form a helical membrane-spanning segment. Topologically, residues 250–277 (QVVWRHAHQIALQQHCLAPPHLAATRKG) are cytoplasmic. The chain crosses the membrane as a helical span at residues 278 to 304 (VGTLAVVLGTFGASWLPFAIYCVVGSH). At 305–309 (EDPAV) the chain is on the extracellular side. Residues 310 to 331 (YTYATLLPATYNSMINPIIYAF) traverse the membrane as a helical segment. Residues 332–362 (RNQEIQRALWLLLCGCFQSKVPFRSRSPSEV) lie on the Cytoplasmic side of the membrane. Cysteine 345 is lipidated: S-palmitoyl cysteine. Phosphoserine is present on residues serine 356, serine 358, and serine 360.

This sequence belongs to the G-protein coupled receptor 1 family.

Its subcellular location is the cell membrane. Orphan receptor with constitutive G(s) signaling activity that activate cyclic AMP. Promotes neurite outgrowth and blocks myelin inhibition in neurons. The polypeptide is G-protein coupled receptor 6 (GPR6) (Homo sapiens (Human)).